Reading from the N-terminus, the 492-residue chain is Glutamyl-tRNA(Gln) amidotransferase subunit A (492 aa).

Residues Lys-80 and Ser-155 each act as charge relay system in the active site. The active-site Acyl-ester intermediate is the Ser-179.

It belongs to the amidase family. GatA subfamily. As to quaternary structure, heterotrimer of A, B and C subunits.

The catalysed reaction is L-glutamyl-tRNA(Gln) + L-glutamine + ATP + H2O = L-glutaminyl-tRNA(Gln) + L-glutamate + ADP + phosphate + H(+). Allows the formation of correctly charged Gln-tRNA(Gln) through the transamidation of misacylated Glu-tRNA(Gln) in organisms which lack glutaminyl-tRNA synthetase. The reaction takes place in the presence of glutamine and ATP through an activated gamma-phospho-Glu-tRNA(Gln). The sequence is that of Glutamyl-tRNA(Gln) amidotransferase subunit A from Mycobacteroides abscessus (strain ATCC 19977 / DSM 44196 / CCUG 20993 / CIP 104536 / JCM 13569 / NCTC 13031 / TMC 1543 / L948) (Mycobacterium abscessus).